The primary structure comprises 498 residues: N-acyl-D-aspartate deacylase (498 aa).

The interval 478–498 (AERPGQVLAPGDAIPWSQQSE) is disordered.

The protein belongs to the metallo-dependent hydrolases superfamily. N-acyl-D-amino-acid deacylase family. Zn(2+) serves as cofactor.

It is found in the cytoplasm. It catalyses the reaction an N-acyl-D-aspartate + H2O = D-aspartate + a carboxylate. The sequence is that of N-acyl-D-aspartate deacylase from Alcaligenes xylosoxydans xylosoxydans (Achromobacter xylosoxidans).